Here is a 496-residue protein sequence, read N- to C-terminus: COP9 signalosome complex subunit 3 (496 aa).

The region spanning 243–411 (QASHCLGIVI…GNETTTMLRF (169 aa)) is the PCI domain. A disordered region spans residues 468-496 (GSSERSGVVGSTEADGGGDLDEDLMGDGR). The span at 483–496 (GGGDLDEDLMGDGR) shows a compositional bias: acidic residues.

Belongs to the CSN3 family. Component of the COP9 signalosome (CSN) complex.

It is found in the cytoplasm. The protein localises to the nucleus. Component of the COP9 signalosome (CSN) complex that acts as an regulator of the ubiquitin (Ubl) conjugation pathway by mediating the deneddylation of the cullin subunit of SCF-type E3 ubiquitin-protein ligase complexes. The CSN complex seems to link protein degradation to sexual development. The protein is COP9 signalosome complex subunit 3 (csnC) of Emericella nidulans (strain FGSC A4 / ATCC 38163 / CBS 112.46 / NRRL 194 / M139) (Aspergillus nidulans).